The primary structure comprises 194 residues: Imidazoleglycerol-phosphate dehydratase (194 aa).

The protein belongs to the imidazoleglycerol-phosphate dehydratase family.

It localises to the cytoplasm. The catalysed reaction is D-erythro-1-(imidazol-4-yl)glycerol 3-phosphate = 3-(imidazol-4-yl)-2-oxopropyl phosphate + H2O. It functions in the pathway amino-acid biosynthesis; L-histidine biosynthesis; L-histidine from 5-phospho-alpha-D-ribose 1-diphosphate: step 6/9. In Listeria monocytogenes serotype 4a (strain HCC23), this protein is Imidazoleglycerol-phosphate dehydratase.